The following is a 178-amino-acid chain: Large ribosomal subunit protein uL6 (178 aa).

This sequence belongs to the universal ribosomal protein uL6 family. In terms of assembly, part of the 50S ribosomal subunit.

Its function is as follows. This protein binds to the 23S rRNA, and is important in its secondary structure. It is located near the subunit interface in the base of the L7/L12 stalk, and near the tRNA binding site of the peptidyltransferase center. The chain is Large ribosomal subunit protein uL6 from Coxiella burnetii (strain CbuG_Q212) (Coxiella burnetii (strain Q212)).